The sequence spans 388 residues: MLEGSWINRREDKLGVYSLVHFSPKMLGSVATTLPLSSSNSSGMPLGYYLSSPQISRVTISTTGQLTSKATVGSCSRVENSLDASPFSVPKKQDESPMIGDGEDYFLSLFGDSKKLTAHSNYTQKTLKYFSMILEEVGQFTSSSLGDVEIAEVNVKGLFVKLINSSLDKEMAIGDHILQQNVNGQTISLYRFLPNIVMQANSTVTVWAAASEAKHQPPSDFLWKEQDKFRASPDCITILCKPNGQAIAWYTPIHWKQAWEKLDADVEFNRCSVVSPTFRKRVFQWTASTATITKEKQDQPKKDISNYQVEQAQVLLKREKEIPPTVFPNRSPWCQNPYVSAHPYCPLIEPHNTSTAGGRLDRQPRTRSTRPNRASGSKKKKTSESQKQ.

The LTD domain maps to 136-254 (EVGQFTSSSL…QAIAWYTPIH (119 aa)). Positions 349 to 388 (EPHNTSTAGGRLDRQPRTRSTRPNRASGSKKKKTSESQKQ) are disordered. Positions 365 to 381 (RTRSTRPNRASGSKKKK) are enriched in basic residues.

The protein belongs to the intermediate filament family.

This is Lamin tail domain-containing protein 1 (LMNTD1) from Homo sapiens (Human).